A 201-amino-acid polypeptide reads, in one-letter code: NADH-quinone oxidoreductase subunit C (201 aa).

Belongs to the complex I 30 kDa subunit family. NDH-1 is composed of 14 different subunits. Subunits NuoB, C, D, E, F, and G constitute the peripheral sector of the complex.

It is found in the cell inner membrane. It carries out the reaction a quinone + NADH + 5 H(+)(in) = a quinol + NAD(+) + 4 H(+)(out). Its function is as follows. NDH-1 shuttles electrons from NADH, via FMN and iron-sulfur (Fe-S) centers, to quinones in the respiratory chain. The immediate electron acceptor for the enzyme in this species is believed to be ubiquinone. Couples the redox reaction to proton translocation (for every two electrons transferred, four hydrogen ions are translocated across the cytoplasmic membrane), and thus conserves the redox energy in a proton gradient. The sequence is that of NADH-quinone oxidoreductase subunit C from Aromatoleum aromaticum (strain DSM 19018 / LMG 30748 / EbN1) (Azoarcus sp. (strain EbN1)).